Reading from the N-terminus, the 172-residue chain is Large ribosomal subunit protein uL10 (172 aa).

The protein belongs to the universal ribosomal protein uL10 family. Part of the ribosomal stalk of the 50S ribosomal subunit. The N-terminus interacts with L11 and the large rRNA to form the base of the stalk. The C-terminus forms an elongated spine to which L12 dimers bind in a sequential fashion forming a multimeric L10(L12)X complex.

In terms of biological role, forms part of the ribosomal stalk, playing a central role in the interaction of the ribosome with GTP-bound translation factors. This chain is Large ribosomal subunit protein uL10, found in Rhizobium rhizogenes (strain K84 / ATCC BAA-868) (Agrobacterium radiobacter).